The following is a 437-amino-acid chain: Transcription factor ets-4 (437 aa).

Residues 1–30 (MNGTGSVGHRWNSLSPEPHSGTESTASTPF) are disordered. Polar residues predominate over residues 21–30 (GTESTASTPF). K32 is covalently cross-linked (Glycyl lysine isopeptide (Lys-Gly) (interchain with G-Cter in SUMO)). S73 carries the post-translational modification Phosphoserine. K83 participates in a covalent cross-link: Glycyl lysine isopeptide (Lys-Gly) (interchain with G-Cter in SUMO). One can recognise a PNT domain in the interval 120 to 202 (HLIQDISTTC…AQLQVWKTGT (83 aa)). A disordered region spans residues 275-302 (QGTVLPSPSNSDTSSNGSSQDMNDDDID). A compositionally biased stretch (low complexity) spans 280–293 (PSPSNSDTSSNGSS). The ETS DNA-binding region spans 349–432 (VHLWQFIREL…KKQRLVYKFL (84 aa)).

It belongs to the ETS family. May interact with cebp-1. May interact with tdpt-1 to facilitate its sumoylation. Post-translationally, phosphorylation is required for axon regeneration. In terms of processing, sumoylated; sumoylation inhibits phosphorylation, which is required for probable interaction with cebp-1 and consequently the expression of svh-2. As to expression, expressed in cells of the anterior and posterior bulbs of the pharynx, seam cells, a few unidentified cells of the vulva, the hypodermis, several unidentified neurons, labial socket cells of the head and rectal cells.

It localises to the nucleus. Functionally, transcription factor which binds to 5'-GGAA/T-3' DNA consensus sequences. Both positively and negatively regulates the expression of target genes. Plays a role in the regulation of adult lifespan, which may in part be through modulation of daf-16 activity. Regulates the expression of genes such as svh-2 in response to axon injury and in addition, may function downstream of the cAMP signaling pathway to promote axon regeneration. Regulates the expression of lipid metabolism genes and may also control the expression of the RNA-binding protein rege-1 which too has been implicated in the control of fat accumulation. This chain is Transcription factor ets-4, found in Caenorhabditis elegans.